The sequence spans 325 residues: MFLQSRVSRLLAQLRAAGQLLGAPRPWPGPSPGATRTRSSACGPPASLSAHHPRARTSAGVGAWGAAAVGRRAGVRTWAPLAMAAKVDLSTSTDWKEAKSFLKGLSDKQREEHYFCRDFVRLKKIPTWKETAKGVTVKVEEPKYKKDKQLNEKISLFRGDITKLEVDAIVNAANSSLLGGGGVDGCIHRAAGPLLTDECRTLQNCETGKAKITCGYRLPAKYVIHTVGPIAHGEPSASQAAELRSCYLSSLDLLLEHRLRSAAFPCISTGVFGYPNEAAAEVVLTALREWLEQHKDKVDRLIICVFLEKDENIYRERLPHYFPVA.

A disordered region spans residues 21-55 (LGAPRPWPGPSPGATRTRSSACGPPASLSAHHPRA). N6-succinyllysine occurs at positions 96, 103, and 129. K138 participates in a covalent cross-link: Glycyl lysine isopeptide (Lys-Gly) (interchain with G-Cter in SUMO2). The 182-residue stretch at 141–322 (EPKYKKDKQL…IYRERLPHYF (182 aa)) folds into the Macro domain. 159–161 (GDI) is a substrate binding site. At K163 the chain carries N6-acetyllysine. Residues 172 to 174 (AAN), 179 to 184 (GGGGVD), 267 to 273 (ISTGVFG), and F306 each bind substrate.

It belongs to the MacroD-type family. MacroD1/2-like subfamily. Interacts with ESR1; Interacts in a manner that is estrogen independent but is enhanced by estrogen. Interacts (via macro domain) with AR.

The protein resides in the nucleus. It carries out the reaction 3''-O-acetyl-ADP-D-ribose + H2O = ADP-D-ribose + acetate + H(+). It catalyses the reaction 2''-O-acetyl-ADP-D-ribose + H2O = ADP-D-ribose + acetate + H(+). The enzyme catalyses 4-O-(ADP-D-ribosyl)-L-aspartyl-[protein] + H2O = L-aspartyl-[protein] + ADP-D-ribose + H(+). The catalysed reaction is 5-O-(ADP-D-ribosyl)-L-glutamyl-[protein] + H2O = L-glutamyl-[protein] + ADP-D-ribose + H(+). It carries out the reaction alpha-NAD(+) + H2O = ADP-D-ribose + nicotinamide + H(+). Its activity is regulated as follows. Subject to competitive inhibition by the product ADP-ribose. In terms of biological role, removes ADP-ribose from aspartate and glutamate residues in proteins bearing a single ADP-ribose moiety. Inactive towards proteins bearing poly-ADP-ribose. Deacetylates O-acetyl-ADP ribose, a signaling molecule generated by the deacetylation of acetylated lysine residues in histones and other proteins. Plays a role in estrogen signaling. Binds to androgen receptor (AR) and amplifies the transactivation function of AR in response to androgen. May play an important role in carcinogenesis and/or progression of hormone-dependent cancers by feed-forward mechanism that activates ESR1 transactivation. Could be an ESR1 coactivator, providing a positive feedback regulatory loop for ESR1 signal transduction. Could be involved in invasive growth by down-regulating CDH1 in endometrial cancer cells. Enhances ESR1-mediated transcription activity. This chain is ADP-ribose glycohydrolase MACROD1 (MACROD1), found in Bos taurus (Bovine).